The following is a 791-amino-acid chain: Ataxin-1 (791 aa).

Residues Met1 to Ala30 show a composition bias toward basic and acidic residues. Residues Met1–Asp36 are disordered. Lys16 is covalently cross-linked (Glycyl lysine isopeptide (Lys-Gly) (interchain with G-Cter in SUMO)). Residues Ser81 and Ser87 each carry the phosphoserine modification. Disordered stretches follow at residues Ser187–Pro240 and Glu298–Tyr402. A Glycyl lysine isopeptide (Lys-Gly) (interchain with G-Cter in SUMO) cross-link involves residue Lys193. Ser213 is modified (phosphoserine). Thr218 carries the post-translational modification Phosphothreonine. Polar residues-rich tracts occupy residues Gln219–Ala236, Ala312–Ser327, and Pro362–Asp388. At Ser229 the chain carries Phosphoserine. A self-association region spans residues Val470–Ile580. The interval Leu514–Lys791 is interaction with USP7. An RNA-binding region spans residues Thr516–Pro742. The AXH domain occupies Ser538–Gly669. Glycyl lysine isopeptide (Lys-Gly) (interchain with G-Cter in SUMO) cross-links involve residues Lys585, Lys672, and Lys721. Positions Lys736 to Leu774 are disordered. A Phosphoserine modification is found at Ser751. Residues Pro770 to Ser773 carry the Nuclear localization signal motif.

This sequence belongs to the ATXN1 family. In terms of assembly, homooligomer. Interacts with PQBP1, UBQLN4 and USP7. Interacts with ANP32A. Interacts with CIC. Directly interacts with RBPJ; this interaction is disrupted in the presence of Notch intracellular domain. Interacts with ATXN1L; competes with ATXN1L for RBPJ-binding. Found in a complex with CIC and ATXN1L. Ubiquitinated by UBE3A, leading to its degradation by the proteasome. The presence of poly-Gln repeats in trangenic models developed to replicate phenotypes of the spinocerebellar ataxia 1 disease (SCA1) impair ubiquitination and degradation, leading to accumulation of Atxn1 in neurons and subsequent toxicity. Post-translationally, sumoylation is dependent on nuclear localization and phosphorylation at Ser-751. In terms of tissue distribution, expressed in the cortex and hypothalamus (at protein level). Widely expressed. In brain, the pattern of distribution is limited to neuron populations.

The protein resides in the cytoplasm. It is found in the nucleus. In terms of biological role, chromatin-binding factor that repress Notch signaling in the absence of Notch intracellular domain by acting as a CBF1 corepressor. Binds to the HEY promoter and might assist, along with NCOR2, RBPJ-mediated repression. May be involved in RNA metabolism. In concert with CIC and ATXN1L, involved in brain development. The sequence is that of Ataxin-1 (Atxn1) from Mus musculus (Mouse).